Consider the following 593-residue polypeptide: Aspartate--tRNA ligase (593 aa).

E181 provides a ligand contact to L-aspartate. The aspartate stretch occupies residues 205–208; sequence QLYK. R227 lines the L-aspartate pocket. ATP-binding positions include 227-229 and Q236; that span reads RDE. Residue H455 participates in L-aspartate binding. E489 is an ATP binding site. Residue R496 coordinates L-aspartate. An ATP-binding site is contributed by 541 to 544; it reads GLDR.

It belongs to the class-II aminoacyl-tRNA synthetase family. Type 1 subfamily. In terms of assembly, homodimer.

It is found in the cytoplasm. The enzyme catalyses tRNA(Asp) + L-aspartate + ATP = L-aspartyl-tRNA(Asp) + AMP + diphosphate. Its function is as follows. Catalyzes the attachment of L-aspartate to tRNA(Asp) in a two-step reaction: L-aspartate is first activated by ATP to form Asp-AMP and then transferred to the acceptor end of tRNA(Asp). The polypeptide is Aspartate--tRNA ligase (Ruminiclostridium cellulolyticum (strain ATCC 35319 / DSM 5812 / JCM 6584 / H10) (Clostridium cellulolyticum)).